The sequence spans 898 residues: Aconitate hydratase 1 (898 aa).

Ala2 is modified (N-acetylalanine). Substrate contacts are provided by residues Gln90 and 209 to 211; that span reads DSH. The [4Fe-4S] cluster site is built by Cys441, Cys507, and Cys510. Residues Arg540, Arg545, Arg703, and 784-785 each bind substrate; that span reads SR.

The protein belongs to the aconitase/IPM isomerase family. As to quaternary structure, monomer. [4Fe-4S] cluster serves as cofactor. Mostly expressed in roots, stems and leaves, also present in stems and flowers.

The protein localises to the cytoplasm. The protein resides in the mitochondrion. It catalyses the reaction citrate = D-threo-isocitrate. It functions in the pathway carbohydrate metabolism; tricarboxylic acid cycle; isocitrate from oxaloacetate: step 2/2. Its function is as follows. Catalyzes the isomerization of citrate to isocitrate via cis-aconitate. Contributes to oxidative stress tolerance. May have a role in respiration. The chain is Aconitate hydratase 1 from Arabidopsis thaliana (Mouse-ear cress).